The following is a 213-amino-acid chain: Agglutinin isolectin 2 (213 aa).

An N-terminal signal peptide occupies residues 1–27; sequence MRKMMSTMALTLGAAVFLAFAAATAQA. At Gln-28 the chain carries Pyrrolidone carboxylic acid. Chitin-binding type-1 domains follow at residues 28-69, 70-112, 113-155, and 156-198; these read QRCG…ACWT, SKRC…PCRA, DIKC…ACST, and DKPC…GCDA. Disulfide bonds link Cys-30/Cys-45, Cys-39/Cys-51, Cys-44/Cys-58, Cys-62/Cys-67, Cys-73/Cys-88, Cys-82/Cys-94, Cys-87/Cys-101, Cys-105/Cys-110, Cys-116/Cys-131, Cys-125/Cys-137, Cys-130/Cys-144, Cys-148/Cys-153, Cys-159/Cys-174, Cys-168/Cys-180, Cys-173/Cys-187, and Cys-191/Cys-196. 37-39 provides a ligand contact to substrate; that stretch reads MEC. 89-100 is a binding site for substrate; the sequence is SQYGHCGFGAEY. Substrate is bound at residue 141–142; sequence SE. A propeptide spanning residues 199 to 213 is cleaved from the precursor; it reads VFAGAITANSTLLAE.

In terms of assembly, homodimer, u-shaped.

In terms of biological role, N-acetyl-D-glucosamine / N-acetyl-D-neuraminic acid binding lectin. The chain is Agglutinin isolectin 2 from Triticum aestivum (Wheat).